We begin with the raw amino-acid sequence, 123 residues long: uncharacterized protein (123 aa).

A helical membrane pass occupies residues 5-25 (GTLVIIFAIVLILCIMLLFFY). Residues 32 to 53 (KPSVLPPPIPPPTPPPSKKKYD) are disordered. Residues 35–47 (VLPPPIPPPTPPP) are compositionally biased toward pro residues.

It belongs to the asfivirus CP123L family.

Its subcellular location is the host membrane. It localises to the virion. This is an uncharacterized protein from Ornithodoros (relapsing fever ticks).